The primary structure comprises 979 residues: Peptidyl-glycine alpha-amidating monooxygenase (979 aa).

The first 24 residues, 1 to 24, serve as a signal peptide directing secretion; that stretch reads MAGRARSRLLLLLGLLALQSSCLA. The tract at residues 1 to 497 is peptidylglycine alpha-hydroxylating monooxygenase; sequence MAGRARSRLL…EGPWEPELAG (497 aa). The propeptide occupies 25–34; it reads FRSPLSVFKR. The Intragranular segment spans residues 35-869; sequence FKETTRSFSN…KKLIKDPGSG (835 aa). Disulfide bonds link Cys46-Cys185, Cys80-Cys125, Cys113-Cys130, Cys226-Cys333, and Cys292-Cys314. 2 residues coordinate Cu(2+): His106 and His107. Residues His171, His241, His243, and Met313 each coordinate Cu(2+). The peptidyl-alpha-hydroxyglycine alpha-amidating lyase stretch occupies residues 498–823; the sequence is DFHVEEALEW…SRLEVEHRSV (326 aa). NHL repeat units lie at residues 501–544, 570–611, 620–665, and 673–717; these read VEEA…NSFD, AEIL…LEPR, LGRS…FSPS, and GEES…FKTD. Val520 contributes to the Ca(2+) binding site. Arg533 provides a ligand contact to a protein. Position 585 (His585) interacts with Zn(2+). Residue Leu587 coordinates Ca(2+). Cys634 and Cys655 are oxidised to a cystine. Residue Tyr654 participates in a protein binding. His690 serves as a coordination point for Zn(2+). A disulfide bridge links Cys702 with Cys713. Position 706 (Arg706) interacts with a protein. Asn765 carries N-linked (GlcNAc...) asparagine glycosylation. The NHL 5 repeat unit spans residues 769–812; it reads GEIIDVFKPVRKHFDMPHDIVASEDGTVYIGDAHTNTVWKFTLT. His786 provides a ligand contact to Zn(2+). Asp787 provides a ligand contact to Ca(2+). A helical membrane pass occupies residues 870-893; it reads VPVVLITTLLVIPVVVLLAIAMFI. Over 894-979 the chain is Cytoplasmic; it reads RWKKSRAFGD…APLPTPAPSS (86 aa). Phosphoserine occurs at positions 924, 925, 935, and 948. The interval 931-948 is interaction with RASSF9; it reads NFFASRKGYSRKGFDRVS. The interval 943–979 is disordered; it reads GFDRVSTEGSDQEKDEDDGSESEEEYSAPLPTPAPSS. The residue at position 949 (Thr949) is a Phosphothreonine. Position 952 is a phosphoserine; by UHMK1 (Ser952). Residues 955 to 968 show a composition bias toward acidic residues; it reads EKDEDDGSESEEEY. The residue at position 964 (Ser964) is a Phosphoserine.

In the C-terminal section; belongs to the peptidyl-alpha-hydroxyglycine alpha-amidating lyase family. This sequence in the N-terminal section; belongs to the copper type II ascorbate-dependent monooxygenase family. As to quaternary structure, monomer. Interacts with RASSF9. It depends on Zn(2+) as a cofactor. Cu(2+) is required as a cofactor.

The protein localises to the cytoplasmic vesicle. It localises to the secretory vesicle membrane. It catalyses the reaction a [peptide]-C-terminal glycine + 2 L-ascorbate + O2 = a [peptide]-C-terminal (2S)-2-hydroxyglycine + 2 monodehydro-L-ascorbate radical + H2O. It carries out the reaction a [peptide]-C-terminal (2S)-2-hydroxyglycine = a [peptide]-C-terminal amide + glyoxylate. The enzyme catalyses N-dodecanoylglycine + 2 L-ascorbate + O2 = N-dodecanoyl-(2S)-hydroxyglycine + 2 monodehydro-L-ascorbate radical + H2O. The catalysed reaction is N-dodecanoyl-(2S)-hydroxyglycine = dodecanamide + glyoxylate. It catalyses the reaction N-(9Z,12Z,15Z)-octadecatrienoylglycine + 2 L-ascorbate + O2 = N-(9Z,12Z,15Z)-octadecatrienoyl-(2S)-hydroxyglycine + 2 monodehydro-L-ascorbate radical + H2O. It carries out the reaction N-(9Z,12Z,15Z)-octadecatrienoyl-(2S)-hydroxyglycine = (9Z,12Z,15Z)-octadecatrienamide + glyoxylate. The enzyme catalyses N-(9Z-octadecenoyl)glycine + 2 L-ascorbate + O2 = N-(9Z-octadecenoyl)-(2S)-hydroxyglycine + 2 monodehydro-L-ascorbate radical + H2O. The catalysed reaction is N-(9Z-octadecenoyl)-(2S)-hydroxyglycine = (9Z)-octadecenamide + glyoxylate. It catalyses the reaction N-tetradecanoylglycine + 2 L-ascorbate + O2 = N-tetradecanoyl-(2S)-hydroxyglycine + 2 monodehydro-L-ascorbate radical + H2O. It carries out the reaction N-tetradecanoyl-(2S)-hydroxyglycine = tetradecamide + glyoxylate. The enzyme catalyses N-decanoylglycine + 2 L-ascorbate + O2 = N-decanoyl-(2S)-hydroxyglycine + 2 monodehydro-L-ascorbate radical + H2O. The catalysed reaction is N-decanoyl-(2S)-hydroxyglycine = decanamide + glyoxylate. It catalyses the reaction N-octanoylglycine + 2 L-ascorbate + O2 = N-octanoyl-(2S)-hydroxyglycine + 2 monodehydro-L-ascorbate radical + H2O. It carries out the reaction N-octanoyl-(2S)-hydroxyglycine = octanamide + glyoxylate. Its activity is regulated as follows. PAM activity is inhibited by EDTA, phenylglyoxal and diethyl pyrocarbonate. PAL activity is stimulated by cadmium and inhibited by mercury. Its function is as follows. Bifunctional enzyme that catalyzes amidation of the C-terminus of proteins. Alpha-amidation is present at the C-terminus of many endocrine hormones and neuropeptides and is required for their activity. C-terminal amidation also takes place in response to protein fragmentation triggered by oxidative stress, promoting degradation of amidated protein fragments by the proteasome. Alpha-amidation involves two sequential reactions, both of which are catalyzed by separate catalytic domains of the enzyme. The first step, catalyzed by peptidyl alpha-hydroxylating monooxygenase (PHM) domain, is the copper-, ascorbate-, and O2- dependent stereospecific hydroxylation (with S stereochemistry) at the alpha-carbon (C-alpha) of the C-terminal glycine of the peptidylglycine substrate. The second step, catalyzed by the peptidylglycine amidoglycolate lyase (PAL) domain, is the zinc-dependent cleavage of the N-C-alpha bond, producing the alpha-amidated peptide and glyoxylate. Similarly, catalyzes the two-step conversion of an N-fatty acylglycine to a primary fatty acid amide and glyoxylate. This chain is Peptidyl-glycine alpha-amidating monooxygenase, found in Mus musculus (Mouse).